The following is a 157-amino-acid chain: Small ribosomal subunit protein uS7 (157 aa).

This sequence belongs to the universal ribosomal protein uS7 family. Part of the 30S ribosomal subunit. Contacts proteins S9 and S11.

In terms of biological role, one of the primary rRNA binding proteins, it binds directly to 16S rRNA where it nucleates assembly of the head domain of the 30S subunit. Is located at the subunit interface close to the decoding center, probably blocks exit of the E-site tRNA. This is Small ribosomal subunit protein uS7 from Chloroflexus aggregans (strain MD-66 / DSM 9485).